A 232-amino-acid chain; its full sequence is Orotate phosphoribosyltransferase (232 aa).

5-phospho-alpha-D-ribose 1-diphosphate is bound by residues R107, K108, K111, and 133–141 (EDLTTDGGS). An orotate-binding site is contributed by T137.

Belongs to the purine/pyrimidine phosphoribosyltransferase family. PyrE subfamily. As to quaternary structure, homodimer. Requires Mg(2+) as cofactor.

It carries out the reaction orotidine 5'-phosphate + diphosphate = orotate + 5-phospho-alpha-D-ribose 1-diphosphate. It participates in pyrimidine metabolism; UMP biosynthesis via de novo pathway; UMP from orotate: step 1/2. Functionally, catalyzes the transfer of a ribosyl phosphate group from 5-phosphoribose 1-diphosphate to orotate, leading to the formation of orotidine monophosphate (OMP). The sequence is that of Orotate phosphoribosyltransferase from Cereibacter sphaeroides (strain ATCC 17023 / DSM 158 / JCM 6121 / CCUG 31486 / LMG 2827 / NBRC 12203 / NCIMB 8253 / ATH 2.4.1.) (Rhodobacter sphaeroides).